We begin with the raw amino-acid sequence, 372 residues long: Signal peptide peptidase-like 1 (372 aa).

At 1–6 (METLWT) the chain is on the lumenal side. A helical membrane pass occupies residues 7–27 (LLYLLEPAPATLIVTAVTVTF). Residues 28–54 (ASAFRALNYGKEMERNRDFSEASITLD) lie on the Cytoplasmic side of the membrane. A helical transmembrane segment spans residues 55 to 77 (SSQALMIPVMSSCSLLLMFYLFS). Over 78–81 (SVSQ) the chain is Lumenal. Residues 82–104 (LLTAFTAIASVSSLFYWLSPYAV) form a helical membrane-spanning segment. Residues 105–123 (YMKTQLGLSDPFLSRCCSK) lie on the Cytoplasmic side of the membrane. A helical membrane pass occupies residues 124–146 (SFTRIQGLLLVACAMTVVAWLIS). At 147 to 149 (GHW) the chain is on the lumenal side. The helical transmembrane segment at 150–167 (VLNNLLGISICIAFVSHV) threads the bilayer. Topologically, residues 168–171 (RLPN) are cytoplasmic. The chain crosses the membrane as a helical span at residues 172–192 (IKICAMLLVCLFVYDIFWVFF). The active site involves Asp-186. Residues 193 to 257 (SERFFGANVM…GVVPGVSASD (65 aa)) are Lumenal-facing. The chain crosses the membrane as a helical span at residues 258–278 (FMMLGLGDMAIPAMLLALVLC). The active site involves Asp-265. Topologically, residues 279 to 301 (FDHRKTRDVVNIFDLKSSKGHKY) are cytoplasmic. The chain crosses the membrane as a helical span at residues 302 to 322 (IWYALPGYAIGLVAALAAGVL). Residues 323–325 (THS) lie on the Lumenal side of the membrane. Residues 326–346 (PQPALLYLVPSTLGPVIFMSW) traverse the membrane as a helical segment. Residues 328–330 (PAL) carry the PAL motif. The Cytoplasmic portion of the chain corresponds to 347 to 372 (RRKDLAELWEGPALSNPIEKSHEIEI).

Belongs to the peptidase A22B family. As to expression, ubiquitous.

It is found in the endosome membrane. Functionally, intramembrane-cleaving aspartic protease (I-CLiP) that cleaves type II membrane signal peptides in the hydrophobic plane of the membrane. This chain is Signal peptide peptidase-like 1 (SPPL1), found in Arabidopsis thaliana (Mouse-ear cress).